The following is a 465-amino-acid chain: Cysteine--tRNA ligase (465 aa).

Position 27 (cysteine 27) interacts with Zn(2+). Positions 29–39 (PTVYNFFHIGN) match the 'HIGH' region motif. Zn(2+)-binding residues include cysteine 207, histidine 232, and glutamate 236. Residues 264-268 (KMSKS) carry the 'KMSKS' region motif. Lysine 267 serves as a coordination point for ATP.

This sequence belongs to the class-I aminoacyl-tRNA synthetase family. In terms of assembly, monomer. It depends on Zn(2+) as a cofactor.

The protein localises to the cytoplasm. It catalyses the reaction tRNA(Cys) + L-cysteine + ATP = L-cysteinyl-tRNA(Cys) + AMP + diphosphate. The sequence is that of Cysteine--tRNA ligase from Clostridium botulinum (strain Loch Maree / Type A3).